Reading from the N-terminus, the 399-residue chain is Tyrosine--tRNA ligase (399 aa).

Tyrosine 36 contributes to the L-tyrosine binding site. The 'HIGH' region signature appears at proline 41 to asparagine 50. Positions 166 and 170 each coordinate L-tyrosine. The 'KMSKS' region signature appears at lysine 226–serine 230. Lysine 229 contributes to the ATP binding site. The 64-residue stretch at threonine 332–isoleucine 395 folds into the S4 RNA-binding domain.

Belongs to the class-I aminoacyl-tRNA synthetase family. TyrS type 1 subfamily. Homodimer.

It localises to the cytoplasm. It catalyses the reaction tRNA(Tyr) + L-tyrosine + ATP = L-tyrosyl-tRNA(Tyr) + AMP + diphosphate + H(+). Its function is as follows. Catalyzes the attachment of tyrosine to tRNA(Tyr) in a two-step reaction: tyrosine is first activated by ATP to form Tyr-AMP and then transferred to the acceptor end of tRNA(Tyr). This Mycoplasma pneumoniae (strain ATCC 29342 / M129 / Subtype 1) (Mycoplasmoides pneumoniae) protein is Tyrosine--tRNA ligase.